The primary structure comprises 482 residues: Aspartyl/glutamyl-tRNA(Asn/Gln) amidotransferase subunit B (482 aa).

It belongs to the GatB/GatE family. GatB subfamily. Heterotrimer of A, B and C subunits.

The catalysed reaction is L-glutamyl-tRNA(Gln) + L-glutamine + ATP + H2O = L-glutaminyl-tRNA(Gln) + L-glutamate + ADP + phosphate + H(+). The enzyme catalyses L-aspartyl-tRNA(Asn) + L-glutamine + ATP + H2O = L-asparaginyl-tRNA(Asn) + L-glutamate + ADP + phosphate + 2 H(+). In terms of biological role, allows the formation of correctly charged Asn-tRNA(Asn) or Gln-tRNA(Gln) through the transamidation of misacylated Asp-tRNA(Asn) or Glu-tRNA(Gln) in organisms which lack either or both of asparaginyl-tRNA or glutaminyl-tRNA synthetases. The reaction takes place in the presence of glutamine and ATP through an activated phospho-Asp-tRNA(Asn) or phospho-Glu-tRNA(Gln). The protein is Aspartyl/glutamyl-tRNA(Asn/Gln) amidotransferase subunit B of Methanoregula boonei (strain DSM 21154 / JCM 14090 / 6A8).